A 97-amino-acid polypeptide reads, in one-letter code: Large ribosomal subunit protein bL27 (97 aa).

The disordered stretch occupies residues 14-36 (HKKGGGSTSNGRDSQAKRLGAKA).

Belongs to the bacterial ribosomal protein bL27 family.

In Streptococcus sanguinis (strain SK36), this protein is Large ribosomal subunit protein bL27.